A 173-amino-acid chain; its full sequence is Large ribosomal subunit protein uL15 (173 aa).

The segment covering 1 to 11 has biased composition (basic and acidic residues); sequence MKLNEIRDNQG. Residues 1–50 are disordered; that stretch reads MKLNEIRDNQGARKSRVRVGRGIGSGLGKTGGRGQKGQKSRSGVSINGFE. The segment covering 21-35 has biased composition (gly residues); that stretch reads RGIGSGLGKTGGRGQ.

The protein belongs to the universal ribosomal protein uL15 family. In terms of assembly, part of the 50S ribosomal subunit.

Its function is as follows. Binds to the 23S rRNA. This Rhizorhabdus wittichii (strain DSM 6014 / CCUG 31198 / JCM 15750 / NBRC 105917 / EY 4224 / RW1) (Sphingomonas wittichii) protein is Large ribosomal subunit protein uL15.